A 403-amino-acid chain; its full sequence is Na(+)/H(+) antiporter NhaA (403 aa).

Helical transmembrane passes span 25–45 (IAGL…NSPF), 70–90 (LILW…GLEI), 105–125 (IALP…IFLA), 136–156 (GWAV…AMLG), 165–185 (VFLT…IALA), 188–208 (EGLS…LIVL), 213–233 (VASL…VLES), 234–254 (GVHS…RVSG), 269–289 (VALL…LGGV), 302–322 (IILG…GLAV), 340–360 (GAAL…GLAF), and 369–389 (VNLA…VVLA).

The protein belongs to the NhaA Na(+)/H(+) (TC 2.A.33) antiporter family.

It localises to the cell inner membrane. The enzyme catalyses Na(+)(in) + 2 H(+)(out) = Na(+)(out) + 2 H(+)(in). Functionally, na(+)/H(+) antiporter that extrudes sodium in exchange for external protons. The polypeptide is Na(+)/H(+) antiporter NhaA (Maricaulis maris (strain MCS10) (Caulobacter maris)).